We begin with the raw amino-acid sequence, 90 residues long: Small ribosomal subunit protein bS16 (90 aa).

It belongs to the bacterial ribosomal protein bS16 family.

The polypeptide is Small ribosomal subunit protein bS16 (Streptococcus pyogenes serotype M4 (strain MGAS10750)).